We begin with the raw amino-acid sequence, 452 residues long: tRNA(Ile)-lysidine synthase (452 aa).

27-32 (SGGIDS) provides a ligand contact to ATP.

Belongs to the tRNA(Ile)-lysidine synthase family.

The protein localises to the cytoplasm. The catalysed reaction is cytidine(34) in tRNA(Ile2) + L-lysine + ATP = lysidine(34) in tRNA(Ile2) + AMP + diphosphate + H(+). Functionally, ligates lysine onto the cytidine present at position 34 of the AUA codon-specific tRNA(Ile) that contains the anticodon CAU, in an ATP-dependent manner. Cytidine is converted to lysidine, thus changing the amino acid specificity of the tRNA from methionine to isoleucine. The polypeptide is tRNA(Ile)-lysidine synthase (Persephonella marina (strain DSM 14350 / EX-H1)).